We begin with the raw amino-acid sequence, 175 residues long: Shikimate kinase (175 aa).

14 to 19 (GAGKST) provides a ligand contact to ATP. S18 is a Mg(2+) binding site. 3 residues coordinate substrate: D36, R60, and G82. R120 provides a ligand contact to ATP. R140 is a substrate binding site. ATP is bound at residue Q157.

Belongs to the shikimate kinase family. As to quaternary structure, monomer. Mg(2+) is required as a cofactor.

The protein localises to the cytoplasm. It catalyses the reaction shikimate + ATP = 3-phosphoshikimate + ADP + H(+). Its pathway is metabolic intermediate biosynthesis; chorismate biosynthesis; chorismate from D-erythrose 4-phosphate and phosphoenolpyruvate: step 5/7. Functionally, catalyzes the specific phosphorylation of the 3-hydroxyl group of shikimic acid using ATP as a cosubstrate. In Pasteurella multocida (strain Pm70), this protein is Shikimate kinase.